Reading from the N-terminus, the 142-residue chain is Small ribosomal subunit protein bS6 (142 aa).

Basic and acidic residues predominate over residues 110-133 (NKKPSHAKEKHEKTEHTHSHHLEE). Residues 110 to 142 (NKKPSHAKEKHEKTEHTHSHHLEEAESVGSHSE) form a disordered region.

This sequence belongs to the bacterial ribosomal protein bS6 family.

Its function is as follows. Binds together with bS18 to 16S ribosomal RNA. In Helicobacter pylori (strain HPAG1), this protein is Small ribosomal subunit protein bS6.